The primary structure comprises 119 residues: NADH-quinone oxidoreductase subunit A (119 aa).

3 helical membrane passes run 7–27 (FPVL…MFLG), 63–83 (LIAI…PWGV), and 88–108 (IGWL…VGFV).

This sequence belongs to the complex I subunit 3 family. As to quaternary structure, NDH-1 is composed of 14 different subunits. Subunits NuoA, H, J, K, L, M, N constitute the membrane sector of the complex.

It localises to the cell inner membrane. It carries out the reaction a quinone + NADH + 5 H(+)(in) = a quinol + NAD(+) + 4 H(+)(out). Functionally, NDH-1 shuttles electrons from NADH, via FMN and iron-sulfur (Fe-S) centers, to quinones in the respiratory chain. The immediate electron acceptor for the enzyme in this species is believed to be ubiquinone. Couples the redox reaction to proton translocation (for every two electrons transferred, four hydrogen ions are translocated across the cytoplasmic membrane), and thus conserves the redox energy in a proton gradient. This is NADH-quinone oxidoreductase subunit A from Polynucleobacter necessarius subsp. necessarius (strain STIR1).